The following is a 115-amino-acid chain: CRISPR-associated endoribonuclease Cas2 (115 aa).

Asp22 contributes to the Mg(2+) binding site.

This sequence belongs to the CRISPR-associated endoribonuclease Cas2 protein family. Homodimer, forms a heterotetramer with a Cas1 homodimer. Mg(2+) serves as cofactor.

Its function is as follows. CRISPR (clustered regularly interspaced short palindromic repeat), is an adaptive immune system that provides protection against mobile genetic elements (viruses, transposable elements and conjugative plasmids). CRISPR clusters contain sequences complementary to antecedent mobile elements and target invading nucleic acids. CRISPR clusters are transcribed and processed into CRISPR RNA (crRNA). Functions as a ssRNA-specific endoribonuclease. Involved in the integration of spacer DNA into the CRISPR cassette. The chain is CRISPR-associated endoribonuclease Cas2 from Flavobacterium psychrophilum (strain ATCC 49511 / DSM 21280 / CIP 103535 / JIP02/86).